We begin with the raw amino-acid sequence, 125 residues long: Fluoride-specific ion channel FluC (125 aa).

The next 4 membrane-spanning stretches (helical) occupy residues 6–26 (AWIALAGAGGTLSRYALSGLV), 36–56 (WGTWVVNGLGCFLFGMIWALA), 68–88 (FIVLTGFMGAFTTFSTFAFEA), and 97–117 (WLLAAIHLIGQNSLGLVCVFL). Na(+) is bound by residues Gly-76 and Thr-79.

This sequence belongs to the fluoride channel Fluc/FEX (TC 1.A.43) family.

It is found in the cell inner membrane. The catalysed reaction is fluoride(in) = fluoride(out). Na(+) is not transported, but it plays an essential structural role and its presence is essential for fluoride channel function. In terms of biological role, fluoride-specific ion channel. Important for reducing fluoride concentration in the cell, thus reducing its toxicity. The chain is Fluoride-specific ion channel FluC from Nitrosococcus oceani (strain ATCC 19707 / BCRC 17464 / JCM 30415 / NCIMB 11848 / C-107).